The following is a 360-amino-acid chain: MIIWLSNFLEQYFPFFRLFEYLSFRAILSIITALTISLWMGPKLIAWLQNLQIGQVVRDDGPESHFSKRGTPTMGGIMILTAISVTVFLWADLTNPYVWAVMFVLLGYGAVGFVDDYRKVVRKNTDGLIARWKYFWQSSIALVVAFALYAYGKDTAATQLVVPFFKEVMPQLGLAYILLTYFVIVGTSNAVNLTDGLDGLAIMPTVFVAAGFAFIAWATGNVQFANYLHIPHIPLASELVVVCAAIVGAGFGFLWFNTYPAQVFMGDVGSLALGGALGTIAVLVRQEFLLVIMGGVFVVETLSVILQVGSYKLRGQRIFRMAPIHHHYELKGWPEPRVIVRFWIISMLLVLIALATLKVR.

Helical transmembrane passes span 27–47 (ILSI…LIAW), 73–93 (TMGG…WADL), 94–114 (TNPY…VGFV), 132–152 (WKYF…YAYG), 168–188 (VMPQ…VGTS), 199–219 (GLAI…AWAT), 236–256 (ASEL…FLWF), 263–283 (VFMG…IAVL), 288–308 (FLLV…ILQV), and 338–358 (VIVR…ATLK).

Belongs to the glycosyltransferase 4 family. MraY subfamily. Requires Mg(2+) as cofactor.

It localises to the cell inner membrane. It catalyses the reaction UDP-N-acetyl-alpha-D-muramoyl-L-alanyl-gamma-D-glutamyl-meso-2,6-diaminopimeloyl-D-alanyl-D-alanine + di-trans,octa-cis-undecaprenyl phosphate = di-trans,octa-cis-undecaprenyl diphospho-N-acetyl-alpha-D-muramoyl-L-alanyl-D-glutamyl-meso-2,6-diaminopimeloyl-D-alanyl-D-alanine + UMP. The protein operates within cell wall biogenesis; peptidoglycan biosynthesis. Functionally, catalyzes the initial step of the lipid cycle reactions in the biosynthesis of the cell wall peptidoglycan: transfers peptidoglycan precursor phospho-MurNAc-pentapeptide from UDP-MurNAc-pentapeptide onto the lipid carrier undecaprenyl phosphate, yielding undecaprenyl-pyrophosphoryl-MurNAc-pentapeptide, known as lipid I. The polypeptide is Phospho-N-acetylmuramoyl-pentapeptide-transferase (Aliivibrio fischeri (strain MJ11) (Vibrio fischeri)).